The primary structure comprises 341 residues: Heat-inducible transcription repressor HrcA (341 aa).

This sequence belongs to the HrcA family.

In terms of biological role, negative regulator of class I heat shock genes (grpE-dnaK-dnaJ and groELS operons). Prevents heat-shock induction of these operons. This is Heat-inducible transcription repressor HrcA from Brevibacillus brevis (strain 47 / JCM 6285 / NBRC 100599).